We begin with the raw amino-acid sequence, 94 residues long: DNA-binding protein HU (94 aa).

The disordered stretch occupies residues 56 to 94 (QKGKEGKVPGSDKTYKTEDKRVPKFKPGKTLKQKVEEGK). Residues 68-77 (KTYKTEDKRV) are compositionally biased toward basic and acidic residues. Residues 78-87 (PKFKPGKTLK) are compositionally biased toward basic residues.

Belongs to the bacterial histone-like protein family. As to quaternary structure, homodimer.

Its function is as follows. Histone-like DNA-binding protein which is capable of wrapping DNA to stabilize it, and thus to prevent its denaturation under extreme environmental conditions. This chain is DNA-binding protein HU (hup), found in Helicobacter pylori (strain ATCC 700392 / 26695) (Campylobacter pylori).